The sequence spans 414 residues: Tetraspanning orphan receptor (414 aa).

Over 1 to 28 (MPRASALLTSDPRHQFTCCLCLHVRTGT) the chain is Cytoplasmic. Residues 29-49 (IIFGITQIIIQLIFISFLFLM) traverse the membrane as a helical segment. The Extracellular portion of the chain corresponds to 50-166 (TFNPRLFPED…EIKIRQFSPY (117 aa)). Residues 167–187 (IAVCVTTFSLAFCCFMVHGAI) form a helical membrane-spanning segment. Topologically, residues 188–194 (TRQPTHL) are cytoplasmic. A helical transmembrane segment spans residues 195–215 (LPFFFIQVFDLIICLIHILGF). Residues 216-241 (MSSTSDIRLMIHTKTGPIYIKSTGLA) lie on the Extracellular side of the membrane. A helical transmembrane segment spans residues 242–262 (FIILSISCMMLAFKAYCLGMV). Over 263–414 (WDCYKYLMLN…TSTPSNVHPC (152 aa)) the chain is Cytoplasmic. Residues 306–328 (LTGNLDSANESNTRAHPDPVTYD) are disordered.

Interacts (via N-terminal extracellular domain) with human C2a. In terms of processing, phosphorylated on tyrosine residues.

Its subcellular location is the cell membrane. Functionally, cell surface receptor that binds to human complement C2a protein. This results in inhibition of the classical and lectin pathways of complement activation, probably due to interference with binding of C2a to C4b and interference with cleavage by C1 or MASP2 such that C3 convertase cannot be formed. This infers resistance to complement-mediated cell lysis, allowing parasite survival and infection. This Schistosoma japonicum (Blood fluke) protein is Tetraspanning orphan receptor.